Consider the following 1247-residue polypeptide: MFARKQSGAAPFGAMPVPDQPPSASEKNSSLSPGLNTSNGDGSETETTSAILASVKEQELQFERLTRELEAERQIVASQLERCKLGSETGSMSSISSAGEQFHWQTQDGQKDIEDELTTGLELVDSCIRSLQESGILDPQDYSTSERPSLLSQSALQLNSKPEGSFQYPASYHSNQTLALGDTAPSQLPARSTQARAAGQSFSQGTTGRAGHLAGSEPAPPPPPPREPFAPSLGSAFHLPDAPPAAAALYYSSSTLPAPPRGGSPLTTTQGGSPTKLQRGGSAPEGAAYAAPRGSSPKQSPSRLAKSYSTSSPINIVVSSAGLSPIRVTSPPTVQSTISSSPIHQLSSTIGTYATLSPTKRLVHASEQYSKHSQELYATATLQRPGSLAAGSRASYSSQHGHLAPELRALQSPEHHIDPIYEDRVYQKPPMRSLSQSQGDPLPPAHTGTFRTSTAPSSPGVDSVPLQRTGSQHGPQNAAAATFQRASYAAGPASNYADPYRQLQYCASVDSPYSKSGPALPPEGTLARSPSIDSIQKDPREFGWRDPELPEVIQMLQHQFPSVQSNAAAYLQHLCFGDNKIKAEIRRQGGIQLLVDLLDHRMTEVHRSACGALRNLVYGKANDDNKIALKNCGGIPALVRLLRKTTDLEIRELVTGVLWNLSSCDALKMPIIQDALAVLTNAVIIPHSGWENSPLQDDRKIQLHSSQVLRNATGCLRNVSSAGEEARRRMRECDGLTDALLYVIQSALGSSEIDSKTVENCVCILRNLSYRLAAETSQGQHMGTDELDGLLCGETNGKDTESSGCWGKKKKKKKSQDQWDGVGPLPDCAEPPKGIQMLWHPSIVKPYLTLLSECSNPDTLEGAAGALQNLAAGSWKGWAEDVAGMAYALRSLPEGAPCLPQWSVYIRAAVRKEKGLPILVELLRIDNDRVVCAVATALRNMALDVRNKELIGKYAMRDLVHRLPGGNNSNNSGSKAMSDDTVTAVCCTLHEVITKNMENAKALRDAGGIEKLVGISKSKGDKHSPKVVKAASQVLNSMWQYRDLRSLYKKDGWSQYHFVASSSTIERDRQRPYSSSRTPSISPVRVSPNNRSASAPASPREMISLKERKTDYESAGNNATYHGTKGEHTSRKDTMTAQNTGVSTLYRNSYGAPAEDIKQNQVSTQPVPQEPSRKDYETYQPFPNSTRNYDESFFEDQVHHRPPASEYTMHLGLKSTGNYVDFYSAARPYSELNYETSHYPASPDSWV.

3 disordered regions span residues 1–50 (MFAR…TTSA), 134–238 (SGIL…SAFH), and 256–309 (LPAP…KSYS). A Phosphoserine modification is found at Ser7. Residues 22–50 (PSASEKNSSLSPGLNTSNGDGSETETTSA) are compositionally biased toward polar residues. Residues 49-84 (SAILASVKEQELQFERLTRELEAERQIVASQLERCK) adopt a coiled-coil conformation. Low complexity predominate over residues 149-160 (SLLSQSALQLNS). Polar residues predominate over residues 172–207 (YHSNQTLALGDTAPSQLPARSTQARAAGQSFSQGTT). Position 209 is an omega-N-methylarginine (Arg209). Pro residues predominate over residues 218–228 (PAPPPPPPREP). Arg261 is subject to Omega-N-methylarginine. A phosphoserine mark is found at Ser264 and Ser273. Residues 265 to 276 (PLTTTQGGSPTK) show a composition bias toward polar residues. Arg279 and Arg293 each carry omega-N-methylarginine. The segment covering 296-309 (SPKQSPSRLAKSYS) has biased composition (polar residues). Phosphoserine is present on residues Ser324, Ser357, Ser412, and Ser458. Residues 391 to 433 (GSRASYSSQHGHLAPELRALQSPEHHIDPIYEDRVYQKPPMRS) form an ARM 1 repeat. The disordered stretch occupies residues 429–480 (PPMRSLSQSQGDPLPPAHTGTFRTSTAPSSPGVDSVPLQRTGSQHGPQNAAA). The span at 466 to 475 (LQRTGSQHGP) shows a compositional bias: polar residues. Ser511 carries the post-translational modification Phosphoserine. Tyr513 carries the phosphotyrosine modification. The tract at residues 514-533 (SKSGPALPPEGTLARSPSID) is disordered. 8 ARM repeats span residues 537-576 (KDPREFGWRDPELPEVIQMLQHQFPSVQSNAAAYLQHLCF), 579-618 (NKIKAEIRRQGGIQLLVDLLDHRMTEVHRSACGALRNLVY), 623-663 (DDNK…NLSS), 679-721 (LTNA…NVSS), 725-770 (EARR…NLSY), 832-872 (PKGI…NLAA), 904-943 (VYIRAAVRKEKGLPILVELLRIDNDRVVCAVATALRNMAL), and 997-1040 (MENA…SMWQ). 2 disordered regions span residues 1064-1131 (TIER…HTSR) and 1152-1176 (APAEDIKQNQVSTQPVPQEPSRKDY). The segment covering 1072–1081 (PYSSSRTPSI) has biased composition (polar residues). Residues Ser1087 and Ser1098 each carry the phosphoserine modification. Residues 1087-1100 (SPNNRSASAPASPR) show a composition bias toward low complexity. The span at 1103 to 1112 (ISLKERKTDY) shows a compositional bias: basic and acidic residues.

Belongs to the beta-catenin family. As to quaternary structure, binds to E-cadherin at a juxtamembrane site within the cytoplasmic domain. Binds to PSEN1. Interacts with PDZD2. Interacts (via the extreme C-terminus) with FRMPD2 (via the PDZ 2 domain). Interacts with ZBTB33. Interacts with ARHGEF28. Interacts with CDK5. Interacts with CTNNB1. Interacts with GSK3A and GSK3B. Interacts with DNM2. Interacts with CCDC85B. O-glycosylated. In terms of processing, phosphorylated by CDK5. Phosphorylated by GSK3B. In terms of tissue distribution, expressed in neurons and glial cells. Isoform 2 was found to be the most predominant isoform in various brain regions. Expressed at neuromuscular junctions.

The protein resides in the nucleus. It localises to the cell junction. It is found in the adherens junction. The protein localises to the cell projection. Its subcellular location is the dendrite. The protein resides in the perikaryon. Functionally, has a critical role in neuronal development, particularly in the formation and/or maintenance of dendritic spines and synapses. Involved in the regulation of canonical Wnt signaling. It probably acts on beta-catenin turnover, facilitating beta-catenin interaction with GSK3B, phosphorylation, ubiquitination and degradation. May be involved in neuronal cell adhesion and tissue morphogenesis and integrity by regulating adhesion molecules. Functions as a transcriptional activator when bound to ZBTB33. In Mus musculus (Mouse), this protein is Catenin delta-2 (Ctnnd2).